A 131-amino-acid polypeptide reads, in one-letter code: Fluoride-specific ion channel FluC 2 (131 aa).

4 helical membrane passes run 5–25 (SAVF…NLWI), 35–55 (WLEN…FMIG), 59–79 (PLLS…MSTF), and 95–115 (LLYV…GVFV). Na(+) is bound by residues glycine 71 and threonine 74.

Belongs to the fluoride channel Fluc/FEX (TC 1.A.43) family.

The protein localises to the cell membrane. The enzyme catalyses fluoride(in) = fluoride(out). Na(+) is not transported, but it plays an essential structural role and its presence is essential for fluoride channel function. In terms of biological role, fluoride-specific ion channel. Important for reducing fluoride concentration in the cell, thus reducing its toxicity. This Bacillus subtilis (strain 168) protein is Fluoride-specific ion channel FluC 2.